The sequence spans 231 residues: Phosphatidylserine decarboxylase proenzyme (231 aa).

S188 (schiff-base intermediate with substrate; via pyruvic acid) is an active-site residue. A Pyruvic acid (Ser); by autocatalysis modification is found at S188.

It belongs to the phosphatidylserine decarboxylase family. PSD-A subfamily. As to quaternary structure, heterodimer of a large membrane-associated beta subunit and a small pyruvoyl-containing alpha subunit. Pyruvate is required as a cofactor. Is synthesized initially as an inactive proenzyme. Formation of the active enzyme involves a self-maturation process in which the active site pyruvoyl group is generated from an internal serine residue via an autocatalytic post-translational modification. Two non-identical subunits are generated from the proenzyme in this reaction, and the pyruvate is formed at the N-terminus of the alpha chain, which is derived from the carboxyl end of the proenzyme. The post-translation cleavage follows an unusual pathway, termed non-hydrolytic serinolysis, in which the side chain hydroxyl group of the serine supplies its oxygen atom to form the C-terminus of the beta chain, while the remainder of the serine residue undergoes an oxidative deamination to produce ammonia and the pyruvoyl prosthetic group on the alpha chain.

The protein localises to the cell membrane. It catalyses the reaction a 1,2-diacyl-sn-glycero-3-phospho-L-serine + H(+) = a 1,2-diacyl-sn-glycero-3-phosphoethanolamine + CO2. The protein operates within phospholipid metabolism; phosphatidylethanolamine biosynthesis; phosphatidylethanolamine from CDP-diacylglycerol: step 2/2. Functionally, catalyzes the formation of phosphatidylethanolamine (PtdEtn) from phosphatidylserine (PtdSer). In Rickettsia akari (strain Hartford), this protein is Phosphatidylserine decarboxylase proenzyme.